The sequence spans 499 residues: Serine carboxypeptidase 1 (499 aa).

The signal sequence occupies residues 1 to 30; the sequence is MARCRRRSGCTAGAALLLLLALALSGGGGA. 3 disulfide bridges follow: Cys-92-Cys-388, Cys-256-Cys-268, and Cys-291-Cys-355. N-linked (GlcNAc...) asparagine glycosylation occurs at Asn-148. Ser-188 is an active-site residue. Asn-262 carries an N-linked (GlcNAc...) asparagine glycan. The propeptide at 297 to 351 is linker peptide; sequence IKEVNLQNSKLPQSFKDLGTTNKPFPVRTRMLGRAWPLRAPVKAGRVPSWQEVAS. Asn-407 carries N-linked (GlcNAc...) asparagine glycosylation. Catalysis depends on residues Asp-423 and His-476. Positions 497–499 match the Microbody targeting signal motif; that stretch reads SKL.

This sequence belongs to the peptidase S10 family. As to quaternary structure, carboxypeptidase I is a dimer, where each monomer is composed of two chains linked by disulfide bonds. In terms of processing, the linker peptide is endoproteolytically excised during enzyme maturation.

The protein resides in the secreted. The enzyme catalyses Release of a C-terminal amino acid with broad specificity.. May be involved in the degradation of small peptides (2-5 residues) or in the degradation of storage proteins in the embryo. This Hordeum vulgare (Barley) protein is Serine carboxypeptidase 1 (CBP1).